The sequence spans 228 residues: Somatolactin (228 aa).

The N-terminal stretch at 1–24 (MFSIRMNKVLQGFVCLMLTHRIVG) is a signal peptide. 3 disulfide bridges follow: C29/C38, C88/C200, and C217/C225. 2 N-linked (GlcNAc...) asparagine glycosylation sites follow: N141 and N177.

It belongs to the somatotropin/prolactin family.

It is found in the secreted. This chain is Somatolactin, found in Anguilla anguilla (European freshwater eel).